Reading from the N-terminus, the 583-residue chain is Ribonuclease ZC3H12A (583 aa).

Residues 1–11 (MSLWELEDRRS) are compositionally biased toward basic and acidic residues. 2 disordered regions span residues 1 to 29 (MSLW…EATT) and 73 to 119 (GSAA…GSDL). The span at 15 to 29 (TPRPAQEPTAEEATT) shows a compositional bias: low complexity. The interval 26–71 (EATTAELQMKVDFFRKLGYSSAEIHSVLQKLGIQADTNTVLGELVK) is ubiquitin association domain. The necessary for interaction with TANK stretch occupies residues 65-134 (VLGELVKHGS…DGSNVAMSHG (70 aa)). Residues 73–82 (GSAAERERQA) show a composition bias toward basic and acidic residues. S83 carries the phosphoserine modification. Residues 96–281 (GGGTPKAPTV…LDNFLRKKPL (186 aa)) are RNase. Positions 119-274 (LRPIVIDGSN…LGRHGPSLDN (156 aa)) constitute an RNase NYN domain. An RNA binding region spans residues 198–204 (RRVGGKR). D210 contributes to the Mg(2+) binding site. Disordered regions lie at residues 262–290 (DDPL…KQPC) and 323–404 (ANAL…PSEW). A C3H1-type zinc finger spans residues 284–309 (EHKKQPCPYGRKCTYGIKCRFLHPER). The interval 285 to 441 (HKKQPCPYGR…SELWGVRGGG (157 aa)) is necessary for interaction with ZC3H12D. A compositionally biased stretch (low complexity) spans 341–352 (RPSPSSQPGSLP). Residues 353–364 (TEHEQCSPDRKK) show a composition bias toward basic and acidic residues. Positions 384 to 393 (PTGRSLPPSG) are enriched in low complexity. 2 positions are modified to phosphoserine: S422 and S426. The tract at residues 503–530 (YQLPPPTQRLQEPQAPGPGADRGPWGGA) is disordered.

Belongs to the ZC3H12 family. As to quaternary structure, oligomer. Found in a deubiquitination complex with TANK, USP10 and ZC3H12A; this complex inhibits genotoxic stress- or interleukin-1-beta-mediated NF-kappaB activation by promoting IKBKG or TRAF6 deubiquitination. Interacts with IKBKG; this interaction increases in response to DNA damage. Interacts with TANK; this interaction increases in response to DNA damage and serves as a bridge to anchor both TANK and USP10 into a deubiquitinating complex. Interacts with TRAF6; this interaction increases in response to DNA damage and is stimulated by TANK. Interacts with USP10; this interaction increases in response to DNA damage and serves as a bridge to anchor both TANK and USP10 into a deubiquitinating complex. Interacts with ZC3H12D. Interacts with TNRC6A. Interacts with IKBKB/IKKB. Interacts with IKBKB/IKKB. Interacts with BTRC; the interaction occurs when ZC3H12A is phosphorylated in a IKBKB/IKKB-dependent manner. Interacts with IRAK1; this interaction increases the interaction between ZC3H12A and IKBKB/IKKB. Interacts with UPF1; this interaction occurs in a mRNA translationally active- and termination-dependent manner and is essential for ZC3H12A-mediated degradation of target mRNAs. Associates with ribosomes. Interacts with ubiquitin. Mg(2+) serves as cofactor. Phosphorylated by IRAK1; phosphorylation is necessary for subsequent phosphorylation by the I-kappa-B-kinase (IKK) complex. Phosphorylated by I-kappa-B-kinase (IKK) subunits IKBKB/IKKB and CHUK/IKKA at Ser-422 and Ser-426; these phosphorylations promote ubiquitin proteasome-mediated degradation of ZC3H12A and hence facilitates rapid and robust production of IL-6 mRNA in response to toll-like receptor (TLR) or IL-1 receptor stimuli. In terms of processing, ubiquitinated; ubiquitination is induced in response to interleukin IL1 receptor stimuli in a IKBKB/IKKB and IRAK1-dependent manner, leading to proteasome-mediated degradation. Post-translationally, proteolytically cleaved between Arg-95 and Arg-198 by MALT1 in activated T-cells; cleavage at Arg-95 is critical for promoting ZC3H12A degradation in response to T-cell receptor (TCR) stimulation, and hence is necessary for prolonging the stability of a set of mRNAs controlling T-cell activation and Th17 cell differentiation.

It localises to the nucleus. Its subcellular location is the cytoplasm. The protein localises to the P-body. The protein resides in the rough endoplasmic reticulum membrane. It is found in the cytoplasmic granule. In terms of biological role, endoribonuclease involved in various biological functions such as cellular inflammatory response and immune homeostasis, glial differentiation of neuroprogenitor cells, cell death of cardiomyocytes, adipogenesis and angiogenesis. Functions as an endoribonuclease involved in mRNA decay. Modulates the inflammatory response by promoting the degradation of a set of translationally active cytokine-induced inflammation-related mRNAs, such as IL6 and IL12B, during the early phase of inflammation. Prevents aberrant T-cell-mediated immune reaction by degradation of multiple mRNAs controlling T-cell activation, such as those encoding cytokines (IL6 and IL2), cell surface receptors (ICOS, TNFRSF4 and TNFR2) and transcription factor (REL). Inhibits cooperatively with ZC3H12A the differentiation of helper T cells Th17 in lungs. They repress target mRNA encoding the Th17 cell-promoting factors IL6, ICOS, REL, IRF4, NFKBID and NFKBIZ. The cooperation requires RNA-binding by RC3H1 and the nuclease activity of ZC3H12A. Together with RC3H1, destabilizes TNFRSF4/OX40 mRNA by binding to the conserved stem loop structure in its 3'UTR. Self regulates by destabilizing its own mRNA. Cleaves mRNA harboring a stem-loop (SL), often located in their 3'-UTRs, during the early phase of inflammation in a helicase UPF1-dependent manner. Plays a role in the inhibition of microRNAs (miRNAs) biogenesis. Cleaves the terminal loop of a set of precursor miRNAs (pre-miRNAs) important for the regulation of the inflammatory response leading to their degradation, and thus preventing the biosynthesis of mature miRNAs. Also plays a role in promoting angiogenesis in response to inflammatory cytokines by inhibiting the production of antiangiogenic microRNAs via its anti-dicer RNase activity. Affects the overall ubiquitination of cellular proteins. Positively regulates deubiquitinase activity promoting the cleavage at 'Lys-48'- and 'Lys-63'-linked polyubiquitin chains on TNF receptor-associated factors (TRAFs), preventing JNK and NF-kappa-B signaling pathway activation, and hence negatively regulating macrophage-mediated inflammatory response and immune homeostasis. Also induces deubiquitination of the transcription factor HIF1A, probably leading to its stabilization and nuclear import, thereby positively regulating the expression of proangiogenic HIF1A-targeted genes. Involved in a TANK-dependent negative feedback response to attenuate NF-kappaB activation through the deubiquitination of IKBKG or TRAF6 in response to interleukin-1-beta (IL1B) stimulation or upon DNA damage. Prevents stress granules (SGs) formation and promotes macrophage apoptosis under stress conditions, including arsenite-induced oxidative stress, heat shock, and energy deprivation. Plays a role in the regulation of macrophage polarization; promotes IL4-induced polarization of macrophages M1 into anti-inflammatory M2 state. May also act as a transcription factor that regulates the expression of multiple genes involved in inflammatory response, angiogenesis, adipogenesis and apoptosis. Functions as a positive regulator of glial differentiation of neuroprogenitor cells through an amyloid precursor protein (APP)-dependent signaling pathway. Attenuates septic myocardial contractile dysfunction in response to lipopolysaccharide (LPS) by reducing I-kappa-B-kinase (IKK)-mediated NF-kappa-B activation, and hence myocardial pro-inflammatory cytokine production. The sequence is that of Ribonuclease ZC3H12A from Bos taurus (Bovine).